Here is a 647-residue protein sequence, read N- to C-terminus: Putative lipase atg15 (647 aa).

Residues 1-18 lie on the Cytoplasmic side of the membrane; sequence MLPSGKRKADAFSCTSAA. A helical; Signal-anchor for type II membrane protein membrane pass occupies residues 19–39; the sequence is RVTAKLALSFLALSTTPLVNA. The Lumenal portion of the chain corresponds to 40-647; that stretch reads FSYEEPNAQI…EGGEGPVNDL (608 aa). Asn-203, Asn-225, Asn-283, and Asn-307 each carry an N-linked (GlcNAc...) asparagine glycan. Residue Ser-323 is the Charge relay system of the active site. An N-linked (GlcNAc...) asparagine glycan is attached at Asn-469. Positions 597 to 626 are disordered; the sequence is APALPSSVLTPSATATPPEGQPDDSGKRCR.

It belongs to the AB hydrolase superfamily. Lipase family. In terms of assembly, binds to both phosphatidylinositol (PI) and phosphatidylinositol 3,5-bisphosphate (PIP2).

It localises to the endosome. Its subcellular location is the multivesicular body membrane. The protein localises to the prevacuolar compartment membrane. The enzyme catalyses a triacylglycerol + H2O = a diacylglycerol + a fatty acid + H(+). Lipase which is essential for lysis of subvacuolar cytoplasm to vacuole targeted bodies and intravacuolar autophagic bodies. Involved in the lysis of intravacuolar multivesicular body (MVB) vesicles. The intravacuolar membrane disintegration by atg15 is critical to life span extension. The polypeptide is Putative lipase atg15 (atg15) (Neurospora crassa (strain ATCC 24698 / 74-OR23-1A / CBS 708.71 / DSM 1257 / FGSC 987)).